Reading from the N-terminus, the 156-residue chain is Phosphopantetheine adenylyltransferase (156 aa).

T9 is a binding site for substrate. Residues 9–10 (TF) and H17 each bind ATP. K41, L73, and R87 together coordinate substrate. ATP is bound by residues 88–90 (GVR), E98, and 123–129 (WAFVSST).

It belongs to the bacterial CoaD family. In terms of assembly, homohexamer. Requires Mg(2+) as cofactor.

It localises to the cytoplasm. The catalysed reaction is (R)-4'-phosphopantetheine + ATP + H(+) = 3'-dephospho-CoA + diphosphate. It participates in cofactor biosynthesis; coenzyme A biosynthesis; CoA from (R)-pantothenate: step 4/5. Its function is as follows. Reversibly transfers an adenylyl group from ATP to 4'-phosphopantetheine, yielding dephospho-CoA (dPCoA) and pyrophosphate. This is Phosphopantetheine adenylyltransferase from Haemophilus influenzae (strain 86-028NP).